We begin with the raw amino-acid sequence, 326 residues long: uncharacterized protein (326 aa).

Serine 132 provides a ligand contact to substrate. Tyrosine 157 acts as the Proton acceptor in catalysis.

It belongs to the NAD(P)-dependent epimerase/dehydratase family. dTDP-glucose dehydratase subfamily.

This is an uncharacterized protein from Methanocaldococcus jannaschii (strain ATCC 43067 / DSM 2661 / JAL-1 / JCM 10045 / NBRC 100440) (Methanococcus jannaschii).